A 236-amino-acid polypeptide reads, in one-letter code: Phosphoribosylformylglycinamidine synthase subunit PurQ (236 aa).

Positions 2-234 (RFAVVTFPGS…LSVGLEVAHS (233 aa)) constitute a Glutamine amidotransferase type-1 domain. The active-site Nucleophile is the C86. Active-site residues include H203 and E205.

In terms of assembly, part of the FGAM synthase complex composed of 1 PurL, 1 PurQ and 2 PurS subunits.

Its subcellular location is the cytoplasm. The enzyme catalyses N(2)-formyl-N(1)-(5-phospho-beta-D-ribosyl)glycinamide + L-glutamine + ATP + H2O = 2-formamido-N(1)-(5-O-phospho-beta-D-ribosyl)acetamidine + L-glutamate + ADP + phosphate + H(+). The catalysed reaction is L-glutamine + H2O = L-glutamate + NH4(+). It functions in the pathway purine metabolism; IMP biosynthesis via de novo pathway; 5-amino-1-(5-phospho-D-ribosyl)imidazole from N(2)-formyl-N(1)-(5-phospho-D-ribosyl)glycinamide: step 1/2. Its function is as follows. Part of the phosphoribosylformylglycinamidine synthase complex involved in the purines biosynthetic pathway. Catalyzes the ATP-dependent conversion of formylglycinamide ribonucleotide (FGAR) and glutamine to yield formylglycinamidine ribonucleotide (FGAM) and glutamate. The FGAM synthase complex is composed of three subunits. PurQ produces an ammonia molecule by converting glutamine to glutamate. PurL transfers the ammonia molecule to FGAR to form FGAM in an ATP-dependent manner. PurS interacts with PurQ and PurL and is thought to assist in the transfer of the ammonia molecule from PurQ to PurL. This Thermomicrobium roseum (strain ATCC 27502 / DSM 5159 / P-2) protein is Phosphoribosylformylglycinamidine synthase subunit PurQ.